A 111-amino-acid chain; its full sequence is UPF0321 protein P20C8.02c (111 aa).

The first 17 residues, 1-17 (MLLLFCICCVFIKLVLA), serve as a signal peptide directing secretion. The N-linked (GlcNAc...) asparagine glycan is linked to asparagine 20.

It belongs to the UPF0321 family.

The polypeptide is UPF0321 protein P20C8.02c (Schizosaccharomyces pombe (strain 972 / ATCC 24843) (Fission yeast)).